The primary structure comprises 454 residues: Death-associated protein kinase 3 (454 aa).

In terms of domain architecture, Protein kinase spans 13–275 (YEMGEELGSG…IAQSLEHSWI (263 aa)). ATP is bound by residues 19–27 (LGSGQFAIV) and Lys-42. Phosphoserine; by autocatalysis is present on Ser-50. Pyridone 6 is bound by residues Glu-94 and Val-96. Asp-139 serves as the catalytic Proton acceptor. Residues 161–204 (DFGIAHKIEAGNEFKNIFGTPEFVAPEIVNYEPLGLEADMWSIG) are activation segment. Thr-180 and Thr-225 each carry phosphothreonine. Thr-265 carries the post-translational modification Phosphothreonine; by autocatalysis and ROCK1. Thr-299 bears the Phosphothreonine; by autocatalysis, DAPK1 and ROCK1 mark. Position 306 is a phosphothreonine; by autocatalysis (Thr-306). Ser-309 bears the Phosphoserine; by DAPK1 mark. Phosphoserine; by autocatalysis and DAPK1 is present on Ser-311. Phosphoserine; by DAPK1 occurs at positions 312, 318, and 326. The interval 427 to 441 (VASEMRFVQDLVRAL) is leucine-zipper.

The protein belongs to the protein kinase superfamily. CAMK Ser/Thr protein kinase family. DAP kinase subfamily. As to quaternary structure, homooligomer in its kinase-active form (homotrimers and homodimers are reported); monomeric in its kinase-inactive form. Homodimerization is required for activation segment autophosphorylation. Isoform 1 and isoform 2 interact with myosin and PPP1R12A; interaction of isoform 1 with PPP1R12A is inhibited by RhoA dominant negative form. Interacts with NLK, DAXX, STAT3, RHOD (GTP-bound form) and TCP10L. Interacts with PAWR; the interaction is reported conflictingly: according to PubMed:17953487 does not interact with PAWR. Interacts with ULK1; may be a substrate of ULK1. Interacts with LUZP1; the interaction is likely to occur throughout the cell cycle and reduces the LUZP1-mediated suppression of MYL9 phosphorylation. It depends on Mg(2+) as a cofactor. The phosphorylation status is critical for kinase activity, oligomerization and intracellular localization. Phosphorylation at Thr-180, Thr-225 and Thr-265 is essential for activity. The phosphorylated form is localized in the cytoplasm promoted by phosphorylation at Thr-299; nuclear translocation or retention is maximal when it is not phosphorylated. Phosphorylation increases the trimeric form, and its dephosphorylation favors a kinase-inactive monomeric form. Both isoform 1 and isoform 2 can undergo autophosphorylation. In terms of tissue distribution, widely expressed. Isoform 1 and isoform 2 are expressed in the bladder smooth muscle.

The protein localises to the nucleus. It localises to the PML body. The protein resides in the cytoplasm. It is found in the cytoskeleton. Its subcellular location is the microtubule organizing center. The protein localises to the centrosome. It localises to the chromosome. The protein resides in the centromere. It is found in the spindle. Its subcellular location is the midbody. It catalyses the reaction L-seryl-[protein] + ATP = O-phospho-L-seryl-[protein] + ADP + H(+). The enzyme catalyses L-threonyl-[protein] + ATP = O-phospho-L-threonyl-[protein] + ADP + H(+). Its activity is regulated as follows. A sequential activation is proposed: autophosphorylation at consensus sites is leading to dimerization of the catalytic domain stabilized by phosphorylation at Ser-50 and activation segment exchange (producing an active confirmation of both kinase modules in trans) followed by phosphorylation at Thr-180 in the activation segment and at other regulatory sites. Phosphorylation at Thr-180, Thr-225 and Thr-265 is essential for activity. Oligomerization is required for full enzymatic activity. Inhibited by pyridone-6 (K00225), a potent, ATP-competitive inhibitor. Functionally, serine/threonine kinase which is involved in the regulation of apoptosis, autophagy, transcription, translation and actin cytoskeleton reorganization. Involved in the regulation of smooth muscle contraction. Regulates both type I (caspase-dependent) apoptotic and type II (caspase-independent) autophagic cell deaths signal, depending on the cellular setting. Involved in regulation of starvation-induced autophagy. Regulates myosin phosphorylation in both smooth muscle and non-muscle cells. In smooth muscle, regulates myosin either directly by phosphorylating MYL12B and MYL9 or through inhibition of smooth muscle myosin phosphatase (SMPP1M) via phosphorylation of PPP1R12A; the inhibition of SMPP1M functions to enhance muscle responsiveness to Ca(2+) and promote a contractile state. Phosphorylates MYL12B in non-muscle cells leading to reorganization of actin cytoskeleton. Isoform 2 can phosphorylate myosin, PPP1R12A and MYL12B. Overexpression leads to condensation of actin stress fibers into thick bundles. Involved in actin filament focal adhesion dynamics. The function in both reorganization of actin cytoskeleton and focal adhesion dissolution is modulated by RhoD. Positively regulates canonical Wnt/beta-catenin signaling through interaction with NLK and TCF7L2. Phosphorylates RPL13A on 'Ser-77' upon interferon-gamma activation which is causing RPL13A release from the ribosome, RPL13A association with the GAIT complex and its subsequent involvement in transcript-selective translation inhibition. Enhances transcription from AR-responsive promoters in a hormone- and kinase-dependent manner. Involved in regulation of cell cycle progression and cell proliferation. May be a tumor suppressor. The polypeptide is Death-associated protein kinase 3 (DAPK3) (Homo sapiens (Human)).